Consider the following 86-residue polypeptide: Large ribosomal subunit protein bL27 (86 aa).

Residues 1–11 (MATKKAGGGSR) are compositionally biased toward gly residues. The disordered stretch occupies residues 1–24 (MATKKAGGGSRNGRDSAGRRLGVK).

This sequence belongs to the bacterial ribosomal protein bL27 family.

The chain is Large ribosomal subunit protein bL27 from Rickettsia africae (strain ESF-5).